The chain runs to 153 residues: Endoribonuclease YbeY (153 aa).

3 residues coordinate Zn(2+): histidine 119, histidine 123, and histidine 129.

The protein belongs to the endoribonuclease YbeY family. The cofactor is Zn(2+).

Its subcellular location is the cytoplasm. Its function is as follows. Single strand-specific metallo-endoribonuclease involved in late-stage 70S ribosome quality control and in maturation of the 3' terminus of the 16S rRNA. The sequence is that of Endoribonuclease YbeY from Desulforamulus reducens (strain ATCC BAA-1160 / DSM 100696 / MI-1) (Desulfotomaculum reducens).